We begin with the raw amino-acid sequence, 376 residues long: MLNFELLTTDGNARRGRVTLNHGVVETPIFMPVGTYGSVKAMSPLELNEIGAQIILGNTFHLWLRPGLDVVDTHAGLHKFIGWDKPILTDSGGFQVFSLGELRKITEEGVTFASPVNGDKLFLSPEISMQIQRTLNSDIVMQFDECTPYEIDGRPATHDEAARSMRMSLRWAKRSRDEFDHLANPNALFGIVQGGMFEDLRDESLAGLSELDFHGYAIGGLSVGEPKEDMMRVLEHVGPRLPAHKPHYLMGVGTPEDLVAGVAHGVDMFDCVMPTRNARNGWLFTRFGDVKIRNAAHRNDPRPLDEQCGCYTCRNFSRAYLHHLHRVGEILGARLNTIHNLYYYLELMREMRTAIEEHRFEAFRRQFAENRARGTR.

Residue Asp90 is the Proton acceptor of the active site. Residues 90–94 (DSGGF), Asp144, Gln193, and Gly220 contribute to the substrate site. The RNA binding stretch occupies residues 251–257 (GVGTPED). Asp270 (nucleophile) is an active-site residue. The interval 275–279 (TRNAR) is RNA binding; important for wobble base 34 recognition. Cys308, Cys310, Cys313, and His339 together coordinate Zn(2+).

This sequence belongs to the queuine tRNA-ribosyltransferase family. Homodimer. Within each dimer, one monomer is responsible for RNA recognition and catalysis, while the other monomer binds to the replacement base PreQ1. Zn(2+) serves as cofactor.

The enzyme catalyses 7-aminomethyl-7-carbaguanine + guanosine(34) in tRNA = 7-aminomethyl-7-carbaguanosine(34) in tRNA + guanine. It participates in tRNA modification; tRNA-queuosine biosynthesis. Functionally, catalyzes the base-exchange of a guanine (G) residue with the queuine precursor 7-aminomethyl-7-deazaguanine (PreQ1) at position 34 (anticodon wobble position) in tRNAs with GU(N) anticodons (tRNA-Asp, -Asn, -His and -Tyr). Catalysis occurs through a double-displacement mechanism. The nucleophile active site attacks the C1' of nucleotide 34 to detach the guanine base from the RNA, forming a covalent enzyme-RNA intermediate. The proton acceptor active site deprotonates the incoming PreQ1, allowing a nucleophilic attack on the C1' of the ribose to form the product. After dissociation, two additional enzymatic reactions on the tRNA convert PreQ1 to queuine (Q), resulting in the hypermodified nucleoside queuosine (7-(((4,5-cis-dihydroxy-2-cyclopenten-1-yl)amino)methyl)-7-deazaguanosine). This Cupriavidus metallidurans (strain ATCC 43123 / DSM 2839 / NBRC 102507 / CH34) (Ralstonia metallidurans) protein is Queuine tRNA-ribosyltransferase.